Here is an 829-residue protein sequence, read N- to C-terminus: Spindle-defective protein 2 (829 aa).

4 disordered regions span residues 1–29 (MNEDAPMDLVDDRFADQSIQDEPVDDGES), 41–104 (EDED…SNDI), 183–294 (KKDV…TTSD), and 326–471 (RKKR…NGHM). Basic and acidic residues predominate over residues 54–82 (FRLENRYKPSLHTPRELPTIREENREDVR). Over residues 83 to 93 (SNTSSRVNTRP) the composition is skewed to polar residues. Over residues 183 to 216 (KKDVTRKQENVRPGKMMPEKVNDENEPKSRRFSP) the composition is skewed to basic and acidic residues. Polar residues-rich tracts occupy residues 217-230 (ERNTFTTSPMNSTK) and 266-294 (PQRTSGTPKTYESRHPTNAYTPNSATTSD). The stretch at 314–332 (VDINLLTALENARKKRDRP) forms a coiled coil. Composition is skewed to low complexity over residues 361 to 370 (SMTSIVSSST) and 384 to 408 (NSATSTDLTNSNTSNFTNNTSRVST). 2 stretches are compositionally biased toward polar residues: residues 409-439 (AKNDFSRSSRQRNGFSDSSVSTIIPNMNSMT) and 448-463 (SVSSVRTISRASSTMT).

Its subcellular location is the cytoplasm. The protein resides in the cytoskeleton. It is found in the microtubule organizing center. The protein localises to the centrosome. It localises to the centriole. Functionally, required both for centrosome duplication and maturation. Required for pericentriolar material (PCM) recruitment. The polypeptide is Spindle-defective protein 2 (Caenorhabditis briggsae).